The following is a 512-amino-acid chain: Probable DNA ligase (512 aa).

Position 208 (Glu-208) interacts with ATP. The N6-AMP-lysine intermediate role is filled by Lys-210. ATP contacts are provided by Arg-215, Arg-230, Glu-259, Phe-299, Arg-374, and Lys-380.

The protein belongs to the ATP-dependent DNA ligase family. The cofactor is Mg(2+).

It carries out the reaction ATP + (deoxyribonucleotide)n-3'-hydroxyl + 5'-phospho-(deoxyribonucleotide)m = (deoxyribonucleotide)n+m + AMP + diphosphate.. Its function is as follows. DNA ligase that seals nicks in double-stranded DNA during DNA replication, DNA recombination and DNA repair. The protein is Probable DNA ligase of Streptomyces avermitilis (strain ATCC 31267 / DSM 46492 / JCM 5070 / NBRC 14893 / NCIMB 12804 / NRRL 8165 / MA-4680).